Here is a 528-residue protein sequence, read N- to C-terminus: Vacuolar fusion protein MON1 homolog (528 aa).

Polar residues predominate over residues 1-16; that stretch reads MEVEQTSVRSDTNSTC. The segment at 1–50 is disordered; sequence MEVEQTSVRSDTNSTCEYLDAEGDPESPNLYQEADPDQEAEQQNHSIISE.

This sequence belongs to the MON1/SAND family. In terms of assembly, component of the Mon1-Ccz1 guanyl-nucleotide exchange factor complex made up of Mon1, Ccz1 and Bulli; the interaction of Bulli with the Mon1-Ccz1 heterodimer is mediated via the C-terminal Mic1 domain of Bulli. Mon1 and Ccz1 form a stable complex which displays Rab7 GEF activity with or without Bulli; GEF activity is enhanced by Bulli possibly by improving membrane association of the complex. Interacts with Rab5 and Rab7; preferentially binds GTP-bound Rab5 and GDP-bound Rab7.

The protein resides in the cytoplasm. It is found in the cytosol. The Rab7 guanyl-nucleotide exchange factor (GEF) activity of the Mon1-Ccz1 complex is autoinhibited by the N-terminal disordered region of Mon1. GEF activity is stimulated by Rab5-mediated recruitment to membranes. Its function is as follows. Part of the Mon1-Ccz1 guanyl-nucleotide exchange factor complex specific for Rab7 that promotes the exchange of GDP to GTP, converting Rab7 from an inactive GDP-bound form into an active GTP-bound form. Plays an important role in membrane trafficking through the secretory apparatus. Required for recruitment of Rab7 to endosomal and autophagosomal membranes to mediate endolysosomal and autolysosomal vesicle maturation. Required for fusion of multivesicular bodies and lysosomes but not their formation or trafficking. Involved in the replacement of Rab5 (and possibly Rab4) with Rab7, also known as Rab conversion or the Rab cascade, during endosomal maturation. The Mon1-Ccz1 complex is recruited to phosphatidylinositol 3-phosphate (PtdIns[3]P) enriched membranes by Rab5, which stimulates recruitment and guanyl-nucleotide exchange of Rab7. Together with Rab7 required for autolysosome formation in fat cells and autophagic degradation during starvation-induced basal and developmental autophagy. Involved in neuromuscular junction (NMJ) presynaptic bouton function and morphogenesis. Together with Rab7, regulates levels of postsynaptic glutamate receptor GluRIIA in the NMJ presynapse. This chain is Vacuolar fusion protein MON1 homolog, found in Drosophila melanogaster (Fruit fly).